The primary structure comprises 191 residues: TATA-box-binding protein (191 aa).

Repeat copies occupy residues 18-94 (LQNV…AKIV) and 108-185 (IQNI…YPVL).

Belongs to the TBP family. As to quaternary structure, belongs to the TFIID complex together with the TBP-associated factors (TAFs). Binds DNA as monomer.

The protein resides in the nucleus. General transcription factor that functions at the core of the DNA-binding multiprotein factor TFIID. Binding of TFIID to the TATA box is the initial transcriptional step of the pre-initiation complex (PIC), playing a role in the activation of eukaryotic genes transcribed by RNA polymerase II. This chain is TATA-box-binding protein, found in Acetabularia peniculus (Green alga).